The primary structure comprises 351 residues: Transmembrane protein 185-like (351 aa).

A run of 8 helical transmembrane segments spans residues 16 to 36, 41 to 61, 81 to 101, 113 to 133, 154 to 174, 178 to 198, 212 to 232, and 244 to 264; these read LIYACLLLFSVLLSLRLDGII, WAVFAPIWLWKLMVIIGASVG, FKAMLIAVGIHLLLLTFEVLV, WLLVFMPLFFVSPVSVAACVW, FIFIALKLDGIISWPWLVVCV, ILMSFLCLVVLYYIVWSVLFL, ITMAISWMTIVVPLLTFEILL, and YVPVFVPLWVSLVTLMVTTFG.

The protein belongs to the TMEM185 family.

The protein localises to the membrane. This chain is Transmembrane protein 185-like, found in Danio rerio (Zebrafish).